A 316-amino-acid chain; its full sequence is MRKLHLDSLTLQLRSDLQCIKASSSSLCDQMDCMLRVLQDLKRSSPPPSPDIEKTCAVPQRRVPRRDNRISHRTSDLSEADSACCMDLPSDVSPGSCGQRGLEWDSGYSEVSGSSLRGEEDDIVEEESETRAPAVVLRRLPTPSCQRLSSGGFLNSRQGRIRPKSTSDVCLEQWRGIGLGSDSQDWTGCLLSQSRSRQPLILGDNSFADLVKQWMDLPENGDEEGRRVRDGGRWLHKPHGFLISLSGNVKRRLGNMSRLRHSDQEAVKRMSCPQLGCRPLSPYYHQSLSDIAEASTNLLNCRSRRPIICNEGAGFL.

The segment at 108–130 (YSEVSGSSLRGEEDDIVEEESET) is disordered. Acidic residues predominate over residues 119 to 128 (EEDDIVEEES). Inka box stretches follow at residues 182–219 (DSQDWTGCLLSQSRSRQPLILGDNSFADLVKQWMDLPE) and 289–316 (SDIAEASTNLLNCRSRRPIICNEGAGFL).

Belongs to the INKA family. Interacts with pak4/pak5.

Its subcellular location is the nucleus. The protein resides in the cytoplasm. Inhibitor of the serine/threonine-protein kinase pak4/pak5. Acts by binding pak4/pak5 in a substrate-like manner, inhibiting the protein kinase activity. Required for the proper migration of neural crest cells during embryonic development, probably by inhibiting pak4/pak5. The chain is PAK4-inhibitor inka1 from Xenopus laevis (African clawed frog).